We begin with the raw amino-acid sequence, 109 residues long: Protein reprimo (109 aa).

Residues asparagine 7 and asparagine 18 are each glycosylated (N-linked (GlcNAc...) asparagine). The chain crosses the membrane as a helical span at residues 56-76 (VVQIAVMCVLSLTVVFGIFFL). Phosphoserine is present on serine 98.

The protein belongs to the reprimo family.

It localises to the cytoplasm. Its subcellular location is the membrane. May be involved in the regulation of p53-dependent G2 arrest of the cell cycle. Seems to induce cell cycle arrest by inhibiting CDK1 activity and nuclear translocation of the CDC2 cyclin B1 complex. The chain is Protein reprimo (RPRM) from Bos taurus (Bovine).